We begin with the raw amino-acid sequence, 241 residues long: MASTLKPETLVKKSKAQQKTAEERAAAKVVRQASNQEKRKIIFDRAAAYQKEYTDAERAVIKAKRDAKAAGSYYVDAQPKLVFVVRIKGINKIAPKPRKVLQLLRLTQINAGVFVRLTKATSELLKLAEPYIAYGYPNLSTIRHLVYKRGHGKINKQRIALSDNAIIEANLGKYGILSIEDLIHEIYTVGPNFKQANNFLWPFKLSNPNGGFRTRKFFHFIQGGDTGNREEFINALVKQMN.

The segment at 1–25 (MASTLKPETLVKKSKAQQKTAEERA) is disordered.

It belongs to the universal ribosomal protein uL30 family.

This is Large ribosomal subunit protein uL30 (RPL7) from Debaryomyces hansenii (strain ATCC 36239 / CBS 767 / BCRC 21394 / JCM 1990 / NBRC 0083 / IGC 2968) (Yeast).